The following is a 198-amino-acid chain: Nucleoid occlusion factor SlmA (198 aa).

An HTH tetR-type domain is found at 10-70 (NRREEILQSL…SLIEFIEDSL (61 aa)). Positions 33-52 (TTAKLAASVGVSEAALYRHF) form a DNA-binding region, H-T-H motif. Positions 117 to 144 (EQDRLQGRINQLFERIEAQLRQVLREKR) form a coiled coil.

It belongs to the nucleoid occlusion factor SlmA family. As to quaternary structure, homodimer. Interacts with FtsZ.

The protein localises to the cytoplasm. It localises to the nucleoid. Functionally, required for nucleoid occlusion (NO) phenomenon, which prevents Z-ring formation and cell division over the nucleoid. Acts as a DNA-associated cell division inhibitor that binds simultaneously chromosomal DNA and FtsZ, and disrupts the assembly of FtsZ polymers. SlmA-DNA-binding sequences (SBS) are dispersed on non-Ter regions of the chromosome, preventing FtsZ polymerization at these regions. The polypeptide is Nucleoid occlusion factor SlmA (Escherichia coli O127:H6 (strain E2348/69 / EPEC)).